A 52-amino-acid chain; its full sequence is Alpha-crystallin B chain (52 aa).

It belongs to the small heat shock protein (HSP20) family. In terms of assembly, homodimer. Aggregates with homologous proteins, including alpha-A-crystallin and the small heat shock protein HSPB1, to form large heteromeric complexes.

Its function is as follows. May contribute to the transparency and refractive index of the lens. This is Alpha-crystallin B chain (CRYAB) from Trachemys scripta elegans (Red-eared slider turtle).